Consider the following 467-residue polypeptide: Cysteine--tRNA ligase (467 aa).

A Zn(2+)-binding site is contributed by Cys-30. The short motif at 32–42 (PTVYDDSHLGH) is the 'HIGH' region element. 3 residues coordinate Zn(2+): Cys-209, His-239, and Glu-243. Positions 271-275 (KMSKS) match the 'KMSKS' region motif. Lys-274 contacts ATP.

The protein belongs to the class-I aminoacyl-tRNA synthetase family. As to quaternary structure, monomer. The cofactor is Zn(2+).

It is found in the cytoplasm. It carries out the reaction tRNA(Cys) + L-cysteine + ATP = L-cysteinyl-tRNA(Cys) + AMP + diphosphate. In Aliarcobacter butzleri (strain RM4018) (Arcobacter butzleri), this protein is Cysteine--tRNA ligase.